The chain runs to 319 residues: MPSFISIQNIIYPSNELSLTMILLEEWSLTYVEGIDSKKYLQGQLTIDINLLLKTHHTLCAHCNFNGRVWSTMHLFHYEKGYAYIQRKSVSQIQIKEICKYSIFSKIKIRELNSICLIGFAGCNVRSFLSSLFVKIPNQSCPVIHEDNKTILWYEKPSERFLLVLPFLDFLTLKRKINQNIFLNNSKQWLLLDIEAGLPVIDKICSNKFTPQAINLHNLKAISFKKGCYYGQETIARIFFKKTNKYFLCFLVSTGSIFPKIGSFIETKVDSEWFKVGVLLSIVHVKCEEIYIQVVLRKSVNINNLFRIHGFENIFLIKN.

Folate is bound by residues Trp27 and Trp189.

The protein belongs to the tRNA-modifying YgfZ family.

It localises to the cytoplasm. In terms of biological role, folate-binding protein involved in regulating the level of ATP-DnaA and in the modification of some tRNAs. It is probably a key factor in regulatory networks that act via tRNA modification, such as initiation of chromosomal replication. The sequence is that of tRNA-modifying protein YgfZ from Buchnera aphidicola subsp. Acyrthosiphon pisum (strain APS) (Acyrthosiphon pisum symbiotic bacterium).